An 861-amino-acid chain; its full sequence is Ataxin-7-like protein 1 (861 aa).

Disordered regions lie at residues 1–31 (MTSE…AMAT), 154–189 (GHHS…KGSR), 342–448 (KSRE…GADE), 606–673 (PIPA…LSGP), and 772–861 (FDKS…RTLP). Positions 284–351 (RRLSEREFDP…KSREKEVKDK (68 aa)) constitute an SCA7 domain. Basic and acidic residues predominate over residues 342 to 354 (KSREKEVKDKEHL). Over residues 355 to 369 (LTSTREILPSQSGPA) the composition is skewed to polar residues. Composition is skewed to low complexity over residues 372 to 381 (SLLGSSGSSG), 403 to 417 (SSAN…SNHS), and 606 to 616 (PIPAVIPSPSH). Residues 617–627 (KPSKTKTSKSS) show a composition bias toward basic residues. A compositionally biased stretch (basic and acidic residues) spans 628–641 (KVKDLSTRSDESPS). 2 stretches are compositionally biased toward low complexity: residues 648–671 (QSST…SPLS) and 783–794 (SSSSSKACKITK). Over residues 817-828 (VNSTSSRQVGKN) the composition is skewed to polar residues. Residues 829–847 (SSLALSQSSPSSISSPGHS) show a composition bias toward low complexity.

The polypeptide is Ataxin-7-like protein 1 (ATXN7L1) (Homo sapiens (Human)).